The chain runs to 331 residues: Vacuolar protein sorting-associated protein 26B (331 aa).

A disordered region spans residues alanine 310–aspartate 331.

It belongs to the VPS26 family. Component of the heterotrimeric retromer cargo-selective complex (CSC) which is believed to associate with variable sorting nexins to form functionally distinct retromer complex variants.

It is found in the cytoplasm. It localises to the membrane. The protein resides in the endosome. Functionally, acts as a component of the retromer cargo-selective complex (CSC). The CSC is believed to be the core functional component of retromer or respective retromer complex variants acting to prevent missorting of selected transmembrane cargo proteins into the lysosomal degradation pathway. Retromer mediates retrograde transport of cargo proteins from endosomes to the trans-Golgi network (TGN). The chain is Vacuolar protein sorting-associated protein 26B (vps26b) from Danio rerio (Zebrafish).